Here is a 385-residue protein sequence, read N- to C-terminus: MKNITILGATGSIGTQTLDVIRREKEELKLVAISANKSYKKVIEIIKEFKPKYAVLMEENAFKIVEDFCIDNKIDTKVLKGMEGMIYISTLEEVNTVVTSVVGMIGLVPTIKAIESGKDIALANKETLVVAGELVISKAKEHNVNILPVDSEHGAIFQCLRGNKKEEVKNIIVTASGGPFRGKKKEELIDVKPEHALKHPKWNMGRKISIDSATLMNKGLEVIEAHFLFGVDYENIKVVVHPQSIVHSMVEYKDGSVIAQMATPDMKLPIQYALNYPNRKESQIEPLDFYKISNLTFEKPDMDTFLPLKLAYEAGKKGGVMPAILNGANEVAVDLFLKGKIEFLQIGDLLQECMNKFYKSMEATLENVISVDKEVREYLGKKYDI.

Residues Thr-10, Gly-11, Ser-12, Ile-13, Lys-37, and Asn-124 each coordinate NADPH. Lys-125 is a binding site for 1-deoxy-D-xylulose 5-phosphate. Glu-126 contacts NADPH. Asp-150 lines the Mn(2+) pocket. The 1-deoxy-D-xylulose 5-phosphate site is built by Ser-151, Glu-152, Ser-176, and His-199. Glu-152 contributes to the Mn(2+) binding site. Gly-205 contributes to the NADPH binding site. 1-deoxy-D-xylulose 5-phosphate-binding residues include Ser-212, Asn-217, Lys-218, and Glu-221. Glu-221 serves as a coordination point for Mn(2+).

It belongs to the DXR family. It depends on Mg(2+) as a cofactor. The cofactor is Mn(2+).

The catalysed reaction is 2-C-methyl-D-erythritol 4-phosphate + NADP(+) = 1-deoxy-D-xylulose 5-phosphate + NADPH + H(+). The protein operates within isoprenoid biosynthesis; isopentenyl diphosphate biosynthesis via DXP pathway; isopentenyl diphosphate from 1-deoxy-D-xylulose 5-phosphate: step 1/6. Catalyzes the NADPH-dependent rearrangement and reduction of 1-deoxy-D-xylulose-5-phosphate (DXP) to 2-C-methyl-D-erythritol 4-phosphate (MEP). In Clostridium botulinum (strain Kyoto / Type A2), this protein is 1-deoxy-D-xylulose 5-phosphate reductoisomerase.